A 956-amino-acid chain; its full sequence is RNA-binding protein 44 (956 aa).

The tract at residues 301 to 321 is disordered; it reads DNTQNNQNQSYNPTEENDHNV. An RRM domain is found at 750–824; it reads SLLCITCLPG…HAVQVVHLSG (75 aa). The segment at 831-855 is disordered; sequence KPSDLSHSASESHKEDTAGDELRTK. Positions 840–854 are enriched in basic and acidic residues; it reads SESHKEDTAGDELRT.

The protein resides in the cytoplasm. Component of intercellular bridges during meiosis. Intercellular bridges are evolutionarily conserved structures that connect differentiating germ cells. Not required for fertility. The chain is RNA-binding protein 44 (rbm44) from Danio rerio (Zebrafish).